Consider the following 346-residue polypeptide: MNIKSLLLGSAAALVAASGAQAADAIVAPEPEAVEYVRVCDAYGAGYFYIPGTETCLRISGYVRYDVKGGDDVYTGSDRKGWDKGARFALMFNTNSETELGTLGTYTQLRFNYTSNNSRHDGQYGDFSDDRDVADGSVSTGTDLQFAYITLGGFKVGIDESEFHTFTGYLGDIINDDVISAGSYRTGKIAYTFTGGNGFSAVIALEQGGEDVDNDYTIDGYMPHVVGGLKYAGGWGSIAGVVAYDSVIEEWATKVRGDVNITDRFSVWLQGAYSSAATPNQNYGQWGGDWAVWGGAKFIATEKATFNLQAAHDDWGKTAVTANVAYQLVPGFTITPEVSYTKFGGE.

A signal peptide spans 1–22; the sequence is MNIKSLLLGSAAALVAASGAQA.

It belongs to the alphaproteobacteria porin family. In terms of assembly, monomer.

The protein resides in the cell outer membrane. Functionally, forms passive diffusion pores that allow small molecular weight hydrophilic materials across the outer membrane. This is Porin Omp2a (omp2a) from Brucella ovis.